The sequence spans 517 residues: Probable bifunctional methylthioribulose-1-phosphate dehydratase/enolase-phosphatase E1 (517 aa).

Residues 1–242 are methylthioribulose-1-phosphate dehydratase; the sequence is MACSGCSCEA…CIKLYQLGID (242 aa). Residue Cys-114 coordinates substrate. Positions 132 and 134 each coordinate Zn(2+). Residue Glu-157 is the Proton donor/acceptor; for methylthioribulose-1-phosphate dehydratase activity of the active site. Position 207 (His-207) interacts with Zn(2+). An enolase-phosphatase E1 region spans residues 278 to 517; the sequence is VVLDIEGTTT…FRTIKSFSEI (240 aa). 2 residues coordinate Mg(2+): Asp-281 and Glu-283. Substrate-binding positions include 416–417 and Lys-450; that span reads SS. Asp-476 lines the Mg(2+) pocket.

This sequence in the N-terminal section; belongs to the aldolase class II family. MtnB subfamily. The protein in the C-terminal section; belongs to the HAD-like hydrolase superfamily. MasA/MtnC family. Zn(2+) serves as cofactor. Requires Mg(2+) as cofactor.

The catalysed reaction is 5-(methylsulfanyl)-D-ribulose 1-phosphate = 5-methylsulfanyl-2,3-dioxopentyl phosphate + H2O. The enzyme catalyses 5-methylsulfanyl-2,3-dioxopentyl phosphate + H2O = 1,2-dihydroxy-5-(methylsulfanyl)pent-1-en-3-one + phosphate. It participates in amino-acid biosynthesis; L-methionine biosynthesis via salvage pathway; L-methionine from S-methyl-5-thio-alpha-D-ribose 1-phosphate: step 2/6. It functions in the pathway amino-acid biosynthesis; L-methionine biosynthesis via salvage pathway; L-methionine from S-methyl-5-thio-alpha-D-ribose 1-phosphate: step 3/6. Its pathway is amino-acid biosynthesis; L-methionine biosynthesis via salvage pathway; L-methionine from S-methyl-5-thio-alpha-D-ribose 1-phosphate: step 4/6. This is Probable bifunctional methylthioribulose-1-phosphate dehydratase/enolase-phosphatase E1 from Zea mays (Maize).